A 555-amino-acid chain; its full sequence is Cytochrome P450 monooxygeanse terQ (555 aa).

The chain crosses the membrane as a helical span at residues 10–30 (VPAHAWPTITVAGAVMVVVLL). Position 479 (Cys-479) interacts with heme. The disordered stretch occupies residues 535-555 (DAGNTARVDPGAPDGVASEPS).

Belongs to the cytochrome P450 family. Heme serves as cofactor.

The protein localises to the membrane. It functions in the pathway secondary metabolite biosynthesis. Functionally, cytochrome P450 monooxygeanse; part of the gene cluster that mediates the biosynthesis of terpendoles, indole-diterpene (IDT) mycotoxins including terpendole I, terpendole K, terpendole C, as well as the kinesin Eg5 inhibitor terpendole E. TerQ is a C11-hydroxylating enzyme that converts paspalline into terpendole E. Is also able to hydroxylate 13-desoxyterpendole I at C-13 to produce terpendole I. Terpendoles biosynthesis begins with the synthesis of geranylgeranyl diphosphate (GGPP) by a yet unidentified GGPP synthase. Condensation of indole-3-glycerol phosphate with GGPP by the prenyltransferase terC then forms 3-geranylgeranylindole (3-GGI), followed by epoxidation and cyclization of this intermediate (by the FAD-dependent monooxygeanse terM and the terpene cyclase terB) to form paspaline. The cytochrome monooxygenase terQ then hydroxylates paspalline at C-11 to yield terpendole E. The cytochrome monooxygenase terP converts terpendole E to 13-desoxyterpendole I, and terQ converts 13-desoxyterpendole I into terpendole I. TerF and terK are required for conversion of terpendole I to terpendole C which is further converted to terpendole K. The chain is Cytochrome P450 monooxygeanse terQ from Tolypocladium album (Soil fungus).